The chain runs to 276 residues: Type II pantothenate kinase (276 aa).

An ATP-binding site is contributed by 8–15 (DAGGTLTK). Glu-76 acts as the Proton acceptor in catalysis. Residues Thr-105, 127–131 (GGTIM), Phe-143, and Ser-230 each bind ATP.

This sequence belongs to the type II pantothenate kinase family. Homodimer.

Its subcellular location is the cytoplasm. The catalysed reaction is (R)-pantothenate + ATP = (R)-4'-phosphopantothenate + ADP + H(+). The protein operates within cofactor biosynthesis; coenzyme A biosynthesis; CoA from (R)-pantothenate: step 1/5. In terms of biological role, catalyzes the phosphorylation of pantothenate (Pan), the first step in CoA biosynthesis. In Bacillus anthracis, this protein is Type II pantothenate kinase.